The sequence spans 140 residues: Putative pre-16S rRNA nuclease (140 aa).

This sequence belongs to the YqgF nuclease family.

The protein localises to the cytoplasm. In terms of biological role, could be a nuclease involved in processing of the 5'-end of pre-16S rRNA. This Aeromonas hydrophila subsp. hydrophila (strain ATCC 7966 / DSM 30187 / BCRC 13018 / CCUG 14551 / JCM 1027 / KCTC 2358 / NCIMB 9240 / NCTC 8049) protein is Putative pre-16S rRNA nuclease.